The sequence spans 328 residues: Malate dehydrogenase (328 aa).

Residue 12-18 (GAAGQIG) participates in NAD(+) binding. Positions 95 and 101 each coordinate substrate. NAD(+) is bound by residues N108, Q115, and 132 to 134 (VGN). 2 residues coordinate substrate: N134 and R165. H190 acts as the Proton acceptor in catalysis.

It belongs to the LDH/MDH superfamily. MDH type 2 family.

It carries out the reaction (S)-malate + NAD(+) = oxaloacetate + NADH + H(+). Catalyzes the reversible oxidation of malate to oxaloacetate. This chain is Malate dehydrogenase, found in Polaromonas naphthalenivorans (strain CJ2).